The primary structure comprises 346 residues: Integrin beta-1-binding protein 2 (346 aa).

Positions 5, 10, 24, and 27 each coordinate Zn(2+). The region spanning 5–64 (CHNKGCGQHFDPQTNLPDSCCHHPGVPVFHDALKGWSCCRKRTVDFSEFLNIKGCTVGPH) is the CHORD 1 domain. Residues 28 to 31 (PGVP) carry the SH3-binding motif. Residues Cys-42, Cys-43, Cys-59, and His-64 each coordinate Zn(2+). Positions 70-78 (PEAPQPEGP) match the SH3-binding motif. The tract at residues 70-113 (PEAPQPEGPATSSSLLEQKPPNTIPKSAETLRRERPKSDLPPKL) is disordered. The segment covering 79–94 (ATSSSLLEQKPPNTIP) has biased composition (polar residues). Residues 98 to 109 (ETLRRERPKSDL) are compositionally biased toward basic and acidic residues. Residues Cys-150 and Cys-155 each coordinate Zn(2+). The CHORD 2 domain occupies 150–209 (CQNPGCDAVYQGSESDATPCTYHPGAPRFHEGMKSWSCCGIQTLDFGVFLAQPGCRVGRH). Positions 159 to 162 (YQGS) match the SH2-binding motif. Cys-169 and His-172 together coordinate Zn(2+). Positions 173-176 (PGAP) match the SH3-binding motif. The Zn(2+) site is built by Cys-187, Cys-188, Cys-204, and His-209. One can recognise a CS domain in the interval 216–305 (LASCRHDWHQ…ADPGFWAQLE (90 aa)). Positions 235-238 (YGQI) match the SH2-binding motif. Residues 311 to 346 (AEKSKSGVGLEMDEEESEDSDDDLSWTEEEEEAMGE) form a disordered region. The span at 321–346 (EMDEEESEDSDDDLSWTEEEEEAMGE) shows a compositional bias: acidic residues.

In terms of assembly, interacts with beta-1 integrin subunit. This interaction is regulated by divalent cations, and it occurs only in absence of calcium.

Its function is as follows. May play a role during maturation and/or organization of muscles cells. This Sus scrofa (Pig) protein is Integrin beta-1-binding protein 2 (ITGB1BP2).